The following is a 526-amino-acid chain: Peptide chain release factor 3 (526 aa).

Residues 8–277 enclose the tr-type G domain; the sequence is NKRRTFAIIS…GLTEWAPKPQ (270 aa). Residues 17 to 24, 85 to 89, and 139 to 142 contribute to the GTP site; these read SHPDAGKT, DTPGH, and NKLD.

It belongs to the TRAFAC class translation factor GTPase superfamily. Classic translation factor GTPase family. PrfC subfamily.

It is found in the cytoplasm. Functionally, increases the formation of ribosomal termination complexes and stimulates activities of RF-1 and RF-2. It binds guanine nucleotides and has strong preference for UGA stop codons. It may interact directly with the ribosome. The stimulation of RF-1 and RF-2 is significantly reduced by GTP and GDP, but not by GMP. The polypeptide is Peptide chain release factor 3 (Actinobacillus pleuropneumoniae serotype 5b (strain L20)).